Reading from the N-terminus, the 424-residue chain is GTPase Obg (424 aa).

One can recognise an Obg domain in the interval methionine 1–leucine 158. The region spanning alanine 159–serine 331 is the OBG-type G domain. Residues glycine 165 to serine 172, phenylalanine 190 to threonine 194, aspartate 212 to glycine 215, asparagine 282 to aspartate 285, and serine 312 to alanine 314 each bind GTP. Mg(2+) contacts are provided by serine 172 and threonine 192. Positions arginine 345–lysine 424 constitute an OCT domain.

This sequence belongs to the TRAFAC class OBG-HflX-like GTPase superfamily. OBG GTPase family. In terms of assembly, monomer. Requires Mg(2+) as cofactor.

It localises to the cytoplasm. Functionally, an essential GTPase which binds GTP, GDP and possibly (p)ppGpp with moderate affinity, with high nucleotide exchange rates and a fairly low GTP hydrolysis rate. Plays a role in control of the cell cycle, stress response, ribosome biogenesis and in those bacteria that undergo differentiation, in morphogenesis control. The chain is GTPase Obg from Clostridium acetobutylicum (strain ATCC 824 / DSM 792 / JCM 1419 / IAM 19013 / LMG 5710 / NBRC 13948 / NRRL B-527 / VKM B-1787 / 2291 / W).